The primary structure comprises 146 residues: Hemoglobin subunit beta (146 aa).

The Globin domain occupies Q2–H146. Positions 63 and 92 each coordinate heme b.

Belongs to the globin family. As to quaternary structure, heterotetramer of two alpha chains and two beta chains. Red blood cells.

Its function is as follows. Involved in oxygen transport from the lung to the various peripheral tissues. The chain is Hemoglobin subunit beta (HBB) from Rhea americana (Greater rhea).